We begin with the raw amino-acid sequence, 470 residues long: Diaminobutyrate--2-oxoglutarate aminotransferase (470 aa).

An N6-(pyridoxal phosphate)lysine modification is found at K304.

The protein belongs to the class-III pyridoxal-phosphate-dependent aminotransferase family. The cofactor is pyridoxal 5'-phosphate.

The enzyme catalyses L-2,4-diaminobutanoate + 2-oxoglutarate = L-aspartate 4-semialdehyde + L-glutamate. Its pathway is siderophore biosynthesis; rhizobactin biosynthesis. The chain is Diaminobutyrate--2-oxoglutarate aminotransferase (rhbA) from Rhizobium meliloti (strain 1021) (Ensifer meliloti).